A 1448-amino-acid polypeptide reads, in one-letter code: Murinoglobulin-2 (1448 aa).

The N-terminal stretch at 1 to 24 is a signal peptide; sequence MWKNREAQLCLFSVLLAFLPSASL. 3 disulfides stabilise this stretch: Cys48/Cys86, Cys245/Cys277, and Cys263/Cys289. The N-linked (GlcNAc...) asparagine glycan is linked to Asn55. N-linked (GlcNAc...) asparagine glycans are attached at residues Asn295, Asn315, Asn387, and Asn502. Disulfide bonds link Cys462–Cys556, Cys588–Cys748, and Cys636–Cys681. A bait region region spans residues 678–709; sequence PTYCYDLPKEPPRKDPPRKDPEPKDTVVETIR. 2 N-linked (GlcNAc...) asparagine glycosylation sites follow: Asn751 and Asn846. Cystine bridges form between Cys824–Cys860, Cys898–Cys1295, Cys1056–Cys1101, and Cys1326–Cys1441. A cross-link (isoglutamyl cysteine thioester (Cys-Gln)) is located at residues 949 to 952; the sequence is CGEQ. Asn968 carries an N-linked (GlcNAc...) asparagine glycan. Residues Asn1114, Asn1285, and Asn1398 are each glycosylated (N-linked (GlcNAc...) asparagine).

It belongs to the protease inhibitor I39 (alpha-2-macroglobulin) family. Monomer.

It is found in the secreted. In terms of biological role, a proteinase activates the inhibitor by specific proteolysis in the bait region, which, by an unknown mechanism leads to reaction at the cysteinyl-glutamyl internal thiol ester site and to a conformational change, whereby the proteinase is trapped and/or covalently bound to the inhibitor. While in the tetrameric proteinase inhibitors steric inhibition is sufficiently strong, monomeric forms need a covalent linkage between the activated glutamyl residue of the original thiol ester and a terminal amino group of a lysine or another nucleophilic group on the proteinase, for inhibition to be effective. The chain is Murinoglobulin-2 from Rattus norvegicus (Rat).